We begin with the raw amino-acid sequence, 263 residues long: HTH-type transcriptional repressor NanR (263 aa).

The segment at 1–25 (MDVMNAFDSQAEDSPTSLGRSLRRR) is disordered. The 69-residue stretch at 30-98 (KKLSEMVEEE…NGERARVSRP (69 aa)) folds into the HTH gntR-type domain. Positions 58–77 (ERELMAFFNVGRPSVREALA) form a DNA-binding region, H-T-H motif.

It belongs to the NanR family.

Transcriptional repressor that controls expression of the genes required for the catabolism of sialic acids. The protein is HTH-type transcriptional repressor NanR of Salmonella choleraesuis (strain SC-B67).